The chain runs to 312 residues: Malate dehydrogenase (312 aa).

Residues 12–17 (GAGFTG) and aspartate 36 each bind NAD(+). Substrate is bound by residues arginine 87 and arginine 93. NAD(+) contacts are provided by residues asparagine 100 and 123–125 (LTN). Asparagine 125 lines the substrate pocket. Phosphoserine is present on serine 149. Arginine 156 serves as a coordination point for substrate. The Proton acceptor role is filled by histidine 180.

The protein belongs to the LDH/MDH superfamily. MDH type 3 family.

It carries out the reaction (S)-malate + NAD(+) = oxaloacetate + NADH + H(+). Catalyzes the reversible oxidation of malate to oxaloacetate. The polypeptide is Malate dehydrogenase (Bacillus cereus (strain ATCC 14579 / DSM 31 / CCUG 7414 / JCM 2152 / NBRC 15305 / NCIMB 9373 / NCTC 2599 / NRRL B-3711)).